Here is a 278-residue protein sequence, read N- to C-terminus: Putative ABC transporter ATP-binding protein MJ1572 (278 aa).

Positions Tyr-5–Glu-242 constitute an ABC transporter domain. Position 38-45 (Gly-38–Thr-45) interacts with ATP.

Belongs to the ABC transporter superfamily.

The protein resides in the cell membrane. In terms of biological role, probably part of an ABC transporter complex. Responsible for energy coupling to the transport system. The protein is Putative ABC transporter ATP-binding protein MJ1572 of Methanocaldococcus jannaschii (strain ATCC 43067 / DSM 2661 / JAL-1 / JCM 10045 / NBRC 100440) (Methanococcus jannaschii).